The following is a 1260-amino-acid chain: MKQDVRIAIDRGGTFTDVYYKISGWREQEGIFKLLSVNPKLYDDAPTEGIRRVLCYASGEEIPRKVPLDLTRVSSIRMGTTVATNALLERKGEKTAFIITEGFRNLVEIGNQARPDLFDLTVSRPSPLYQRVIEAKERVVLENQFSKTAGIVQGITGEFLRVEKKLDEEALYQDLKELYNEGFRSISVSLMHSYTYPLHEEVVEKIAKRIGFTDISLSSKLTPMVKIVPRAVSAIIDAYLSSTLRYYLDSFKKNFYNVKPNTIQFMKSDGGLVDIDNFTAISAIMSGPAAGTVGFAKTSSLHADDKTPAIGFDMGGTSTDVSRYDGKFEHIYEANIFGLYIQSPQLDIQTVAAGGGSRLFWRNQLFSVGPESAGAFPGPACYLNGGPLTVTDANVLLGRIIPDFFPKIFGPKENESMNKDIVIEKFSELRDIINIDIEKEKTIEEIAMGFIQVANETMCRPIRKLTESRGLDLSAHHLAVFGGAGGQHACAIASLLNIEKIIIHKYSSVLSAYGLALAHVTHEEQMPCLSVLDEDNLPLIQSKFDVLDKKAVSFLENEGYLESQISTELFANLRYEGNDTTMMIAKPKDSWDFKTLFEESYKNQFGFSLIDRKIMVEDIRIRAIARASNQSEVDTVFASETENENTVFIRDNKPTMYTPVYFAEVGKVNCHVYQLSSLPVHSLITGPAVIVDTTQTLLIEPSFTAKIFARHVLLEKTKSTLVVKKNVDLDPITMTIFANRFMSISEQMGQVLQKTAVSVNVKERLDYSCALFSPDGGLVANAPHVPAMLGSMQTAVKWQHNYWKGKLVPGDVLLSNHPIAGGVHLPDLTVVTPVFDNNKDIIFYCAARGHMVDVGGITPGSMPSNSKAIYEEGAAIKTFKVVKAGTFDEKGLTQLLFDEPAKYPDCSGSRTLRDNISDVKAMLSACHRGRSMVEKLVVEYGLDIVQRSMYGIQAAAEKAVRDVLKAFSVQNSQKPLKAIDYMDDGTPLQLEVKIDPETGDAVFDFEGTGPEVYGNWNAPIAITYSSVIYCLRSIINQDIPLNEGCLKPIEIRIPPSCFLNPSETAAVVGGNVLTSQRITDVILKAFSICAASQGCMNNLTFGYDGENGEEGFAMYETIAGGAGAGPTWNGTSGVHTHMTNTRITDPEVVERRAPVILRRFCLRENSGGKGEYHGGDGVIRHFEFRRSMHCSILSERRSRAPYGMNGGEDGAMGVNTWIDCSNPDFPRYVNLGGKNHVLMGKGDHIVIETPGGGGYGAVSI.

It belongs to the oxoprolinase family.

This is an uncharacterized protein from Schizosaccharomyces pombe (strain 972 / ATCC 24843) (Fission yeast).